The chain runs to 503 residues: Cytochrome P450 monooxygenase lnbC (503 aa).

A helical membrane pass occupies residues 14–34; it reads VVLLLSSVWIAVHLVLAAYNV. Residues Asn-94 and Asn-169 are each glycosylated (N-linked (GlcNAc...) asparagine). Residue Cys-446 participates in heme binding.

It belongs to the cytochrome P450 family. It depends on heme as a cofactor.

The protein localises to the membrane. The protein operates within secondary metabolite biosynthesis. In terms of biological role, cytochrome P450 monooxygenase; part of the lnb gene cluster that mediates the biosynthesis of diastereomeric piperazines. Lna and lnb clusters encode sets of enzymes that produce overlapping sets of previously undescribed metabolites such as piperazinomycin-like metabolites or morpholine. The lna and lnb biosynthetic pathways appear to be part of a signaling network that controls the formation of sclerotia, a resilient overwintering structure. One primary function of the non-canonical nonribosomal peptide synthetases lnaA and lnbA consists in the reduction of L-tyrosine. The presence in the clusters of tailoring enzymes such as the oxidoreductases lnaB, lnbB, lnaE or lnbE, as well as of the cytochrome P450 monooxygenases lnaC, lnaD, or lnbC, might explain formation of various diastereomeric piperazines. The sequence is that of Cytochrome P450 monooxygenase lnbC from Aspergillus flavus (strain ATCC 200026 / FGSC A1120 / IAM 13836 / NRRL 3357 / JCM 12722 / SRRC 167).